Consider the following 346-residue polypeptide: Phosphate acyltransferase (346 aa).

Belongs to the PlsX family. Homodimer. Probably interacts with PlsY.

It localises to the cytoplasm. The enzyme catalyses a fatty acyl-[ACP] + phosphate = an acyl phosphate + holo-[ACP]. Its pathway is lipid metabolism; phospholipid metabolism. Catalyzes the reversible formation of acyl-phosphate (acyl-PO(4)) from acyl-[acyl-carrier-protein] (acyl-ACP). This enzyme utilizes acyl-ACP as fatty acyl donor, but not acyl-CoA. The chain is Phosphate acyltransferase from Crocosphaera subtropica (strain ATCC 51142 / BH68) (Cyanothece sp. (strain ATCC 51142)).